The following is a 296-amino-acid chain: 33 kDa chaperonin (296 aa).

Disulfide bonds link cysteine 233/cysteine 235 and cysteine 267/cysteine 270.

This sequence belongs to the HSP33 family. In terms of processing, under oxidizing conditions two disulfide bonds are formed involving the reactive cysteines. Under reducing conditions zinc is bound to the reactive cysteines and the protein is inactive.

It is found in the cytoplasm. Functionally, redox regulated molecular chaperone. Protects both thermally unfolding and oxidatively damaged proteins from irreversible aggregation. Plays an important role in the bacterial defense system toward oxidative stress. The polypeptide is 33 kDa chaperonin (Actinobacillus pleuropneumoniae serotype 5b (strain L20)).